The primary structure comprises 307 residues: Ribosomal RNA small subunit methyltransferase H (307 aa).

S-adenosyl-L-methionine contacts are provided by residues 33–35 (GGY), Asp-51, Phe-78, Asp-96, and Gln-103.

The protein belongs to the methyltransferase superfamily. RsmH family.

It localises to the cytoplasm. It carries out the reaction cytidine(1402) in 16S rRNA + S-adenosyl-L-methionine = N(4)-methylcytidine(1402) in 16S rRNA + S-adenosyl-L-homocysteine + H(+). In terms of biological role, specifically methylates the N4 position of cytidine in position 1402 (C1402) of 16S rRNA. In Rickettsia conorii (strain ATCC VR-613 / Malish 7), this protein is Ribosomal RNA small subunit methyltransferase H.